A 165-amino-acid polypeptide reads, in one-letter code: Phosphopantetheine adenylyltransferase (165 aa).

S9 serves as a coordination point for substrate. ATP-binding positions include 9–10 and H17; that span reads SF. Residues K41, I75, and R89 each coordinate substrate. Residues 90-92, E100, and 125-131 contribute to the ATP site; these read GVR and YLFVRSD.

Belongs to the bacterial CoaD family. In terms of assembly, homohexamer. Mg(2+) serves as cofactor.

The protein resides in the cytoplasm. The catalysed reaction is (R)-4'-phosphopantetheine + ATP + H(+) = 3'-dephospho-CoA + diphosphate. The protein operates within cofactor biosynthesis; coenzyme A biosynthesis; CoA from (R)-pantothenate: step 4/5. Its function is as follows. Reversibly transfers an adenylyl group from ATP to 4'-phosphopantetheine, yielding dephospho-CoA (dPCoA) and pyrophosphate. The polypeptide is Phosphopantetheine adenylyltransferase (Borrelia turicatae (strain 91E135)).